A 725-amino-acid chain; its full sequence is Dynein axonemal assembly factor 1 (725 aa).

The interval 1 to 91 (MHPEPSEPAT…EDRGPRMTKS (91 aa)) is disordered. The segment covering 38 to 48 (GCKEEINDPKE) has biased composition (basic and acidic residues). A compositionally biased stretch (polar residues) spans 53-67 (SSDTSYHSQQKQSGD). The span at 76-86 (HPREDREDRGP) shows a compositional bias: basic and acidic residues. 6 LRR repeats span residues 107–129 (ALNDTLYLHFKGFDRIENLEEYT), 130–151 (GLRCLWLQSNGIQKIENLEAQT), 152–173 (ELRCLFLQMNLLRKIENLEPLQ), 174–195 (KLDALNLSNNYIKTIENLSCLP), 196–217 (VLNTLQMAHNHLETVEDIQHLQ), and 221–242 (RLCVLDLSHNKLSDPEILSILE). In terms of domain architecture, LRRCT spans 256–294 (PVIRQIPNYRRTVTVRLKHLTYLDDRPVFPKDRACAEAW). A compositionally biased stretch (basic and acidic residues) spans 330–345 (RAEERKRQRESQERGE). Residues 330–513 (RAEERKRQRE…LGAAREEPTP (184 aa)) form a disordered region. The residue at position 358 (S358) is a Phosphoserine. 2 stretches are compositionally biased toward basic and acidic residues: residues 360–408 (EGKE…REDG) and 481–491 (VKGEDGDREPE). Residue T559 is modified to Phosphothreonine. A phosphoserine mark is found at S562 and S583. Residues 632 to 642 (DLEIRKQDTKS) are compositionally biased toward basic and acidic residues. Residues 632–703 (DLEIRKQDTK…AATPPETCVG (72 aa)) form a disordered region.

Belongs to the DNAAF1 family. Mainly expressed in trachea and testis.

The protein resides in the cell projection. The protein localises to the cilium. Its subcellular location is the cytoplasm. It localises to the cytoskeleton. It is found in the spindle pole. In terms of biological role, cilium-specific protein required for the stability of the ciliary architecture. Plays a role in cytoplasmic preassembly of dynein arms. Involved in regulation of microtubule-based cilia and actin-based brush border microvilli. This Homo sapiens (Human) protein is Dynein axonemal assembly factor 1 (DNAAF1).